Reading from the N-terminus, the 327-residue chain is Interleukin-12 subunit beta (327 aa).

The N-terminal stretch at 1–22 (MHPQQLVVSWFSLVLLASPIVA) is a signal peptide. The Ig-like C2-type domain occupies 23–106 (IWELEKNVYV…LSRSLLLLHK (84 aa)). Cys-50 and Cys-90 are joined by a disulfide. Asn-223 is a glycosylation site (N-linked (GlcNAc...) asparagine). The Fibronectin type-III domain maps to 238–327 (PPKNLQLRPL…WSEWASVSCS (90 aa)).

The protein belongs to the IL-12B family. Heterodimer with IL12A; disulfide-linked. The heterodimer is known as interleukin IL-12. Heterodimer with IL23A; disulfide-linked. The heterodimer is known as interleukin IL-23. Also secreted as a monomer. Interacts with NBR1; this interaction promotes IL-12 secretion.

It is found in the secreted. Its function is as follows. Cytokine that can act as a growth factor for activated T and NK cells, enhance the lytic activity of NK/lymphokine-activated killer cells, and stimulate the production of IFN-gamma by resting PBMC. In terms of biological role, associates with IL23A to form the IL-23 interleukin, a heterodimeric cytokine which functions in innate and adaptive immunity. IL-23 may constitute with IL-17 an acute response to infection in peripheral tissues. IL-23 binds to a heterodimeric receptor complex composed of IL12RB1 and IL23R, activates the Jak-Stat signaling cascade, stimulates memory rather than naive T-cells and promotes production of pro-inflammatory cytokines. IL-23 induces autoimmune inflammation and thus may be responsible for autoimmune inflammatory diseases and may be important for tumorigenesis. This is Interleukin-12 subunit beta (IL12B) from Capra hircus (Goat).